Reading from the N-terminus, the 400-residue chain is Enoyl-[acyl-carrier-protein] reductase [NADH] (400 aa).

Residues 48-53, 74-75, 111-112, and 139-140 contribute to the NAD(+) site; these read GSSSGY, FE, DA, and LA. A substrate-binding site is contributed by Tyr225. Tyr235 (proton donor) is an active-site residue. Residues Lys244 and 273–275 each bind NAD(+); that span reads VVT.

The protein belongs to the TER reductase family. In terms of assembly, monomer.

It carries out the reaction a 2,3-saturated acyl-[ACP] + NAD(+) = a (2E)-enoyl-[ACP] + NADH + H(+). It functions in the pathway lipid metabolism; fatty acid biosynthesis. Its function is as follows. Involved in the final reduction of the elongation cycle of fatty acid synthesis (FAS II). Catalyzes the reduction of a carbon-carbon double bond in an enoyl moiety that is covalently linked to an acyl carrier protein (ACP). The sequence is that of Enoyl-[acyl-carrier-protein] reductase [NADH] from Shewanella denitrificans (strain OS217 / ATCC BAA-1090 / DSM 15013).